The sequence spans 269 residues: Expansin-B9 (269 aa).

A signal peptide spans 1–24 (MGSLANNIMVVGAVLAALVVGGSC). Residue Asn34 is glycosylated (N-linked (GlcNAc...) asparagine). Residues 63 to 169 (GGACGIKNVN…RRVRCKYPAG (107 aa)) form the Expansin-like EG45 domain. Intrachain disulfides connect Cys66/Cys94, Cys97/Cys164, and Cys102/Cys108. Residues 183–264 (NYVAVLVKFV…NWRPDAVYTS (82 aa)) enclose the Expansin-like CBD domain.

Belongs to the expansin family. Expansin B subfamily. As to expression, expressed in anthers and pollen.

It is found in the secreted. The protein localises to the cell wall. It localises to the membrane. Functionally, may aid fertilization by loosening the cell wall of the stigma and style, thereby facilitating penetration of the pollen tube. Acts selectively on grass cell walls, which are relatively poor in pectins and xyloglucans and rich in glucuronoarabinoxylans and (1-3),(1-4)-beta-D-glucans, when compared with cell walls of other angiosperms, including other monocots. The chain is Expansin-B9 (EXPB9) from Zea mays (Maize).